A 112-amino-acid chain; its full sequence is uncharacterized protein (112 aa).

To U.parvum UU089.1.

This is an uncharacterized protein from Synechocystis sp. (strain ATCC 27184 / PCC 6803 / Kazusa).